Consider the following 225-residue polypeptide: PKHD-type hydroxylase YbiX (225 aa).

A Fe2OG dioxygenase domain is found at 78-177; the sequence is TLSTPLFNRY…RVASFMWIQS (100 aa). The Fe cation site is built by H96, D98, and H158. A 2-oxoglutarate-binding site is contributed by R168.

The cofactor is Fe(2+). L-ascorbate serves as cofactor.

In Escherichia coli O8 (strain IAI1), this protein is PKHD-type hydroxylase YbiX.